We begin with the raw amino-acid sequence, 116 residues long: Iron-sulfur cluster insertion protein ErpA (116 aa).

Iron-sulfur cluster contacts are provided by Cys44, Cys108, and Cys110.

It belongs to the HesB/IscA family. Homodimer. It depends on iron-sulfur cluster as a cofactor.

Functionally, required for insertion of 4Fe-4S clusters for at least IspG. In Pseudomonas syringae pv. syringae (strain B728a), this protein is Iron-sulfur cluster insertion protein ErpA.